Here is a 513-residue protein sequence, read N- to C-terminus: Maturase K (513 aa).

Belongs to the intron maturase 2 family. MatK subfamily.

Its subcellular location is the plastid. The protein localises to the chloroplast. Functionally, usually encoded in the trnK tRNA gene intron. Probably assists in splicing its own and other chloroplast group II introns. The polypeptide is Maturase K (Molinia caerulea (Purple moor-grass)).